The sequence spans 493 residues: 3-octaprenyl-4-hydroxybenzoate carboxy-lyase (493 aa).

A Mn(2+)-binding site is contributed by Asn172. Residues 175-177, 189-191, and 194-195 each bind prenylated FMN; these read IYR, RWL, and RG. Residue Glu238 coordinates Mn(2+). Asp287 acts as the Proton donor in catalysis.

Belongs to the UbiD family. As to quaternary structure, homohexamer. Prenylated FMN serves as cofactor. The cofactor is Mn(2+).

It localises to the cell membrane. It catalyses the reaction a 4-hydroxy-3-(all-trans-polyprenyl)benzoate + H(+) = a 2-(all-trans-polyprenyl)phenol + CO2. It functions in the pathway cofactor biosynthesis; ubiquinone biosynthesis. Its function is as follows. Catalyzes the decarboxylation of 3-octaprenyl-4-hydroxy benzoate to 2-octaprenylphenol, an intermediate step in ubiquinone biosynthesis. This chain is 3-octaprenyl-4-hydroxybenzoate carboxy-lyase, found in Shewanella putrefaciens (strain CN-32 / ATCC BAA-453).